Here is a 479-residue protein sequence, read N- to C-terminus: MAQHTVYFPDAFLTQMREAMPSTLSFDDFLAACQRPLRRSIRVNTLKISVADFLQLTAPYGWTLTPIPWCEEGFWIERDNEDALPLGSTAEHLSGLFYIQEASSMLPVAALFADGNAPQRVMDVAAAPGSKTTQIAARMNNEGAILANEFSASRVKVLHANISRCGISNVALTHFDGRVFGAAVPEMFDAILLDAPCSGEGVVRKDPDALKNWSPESNQEIAATQRELIDSAFHALRPGGTLVYSTCTLNQEENEAVCLWLKETYPDAVEFLPLGDLFPGANKALTEEGFLHVFPQIYDCEGFFVARLRKTQAIPALPAPKYKVGNFPFSPVKDREAGQIRQAAAGVGLNWDENLRLWQRDKELWLFPVDIEALIGKVRFSRLGIKLAETHNKGYRWQHEAVIALATPDNVNAFELTPQEAEEWYRGRDVYPQAAPVADDVLVTFQHQPIGLAKRIGSRLKNSYPRELVRDGKLFTGNA.

S-adenosyl-L-methionine contacts are provided by residues 125-131 (AAAPGSK), Glu-149, Asp-176, and Asp-194. Cys-247 serves as the catalytic Nucleophile.

It belongs to the class I-like SAM-binding methyltransferase superfamily. RsmB/NOP family.

It localises to the cytoplasm. The enzyme catalyses cytidine(1407) in 16S rRNA + S-adenosyl-L-methionine = 5-methylcytidine(1407) in 16S rRNA + S-adenosyl-L-homocysteine + H(+). Its function is as follows. Specifically methylates the cytosine at position 1407 (m5C1407) of 16S rRNA. This is Ribosomal RNA small subunit methyltransferase F from Shigella boydii serotype 4 (strain Sb227).